The chain runs to 106 residues: MEPYAVIQTGSKQYQVRSGDVIDVELLGEVASDKEVIFQDVLFVFDGTKASLGSPTIANAQVKAEYLSHVKGEKVVAYKYKKRKNYHRKHGHRQKYLRVKIREILI.

It belongs to the bacterial ribosomal protein bL21 family. As to quaternary structure, part of the 50S ribosomal subunit. Contacts protein L20.

Functionally, this protein binds to 23S rRNA in the presence of protein L20. The protein is Large ribosomal subunit protein bL21 of Chlamydia pneumoniae (Chlamydophila pneumoniae).